The primary structure comprises 359 residues: Diacyltrehalose acyltransferase Chp2 (359 aa).

A helical transmembrane segment spans residues 4 to 24; that stretch reads VIAGAFAVWLVGWAGGFGTAI. The 238-residue stretch at 79 to 316 folds into the PE-PPE domain; it reads PNAKHDLIDY…VLQPQIDAAY (238 aa).

This sequence belongs to the mycobacterial PPE family.

Its subcellular location is the cell inner membrane. Its activity is regulated as follows. Activity is probably potentiated by the DAT/PAT transporter MmpL10. Inhibited by the lipase inhibitor tetrahydrolipstatin (THL). Its function is as follows. Involved in the final steps of polyacyltrehalose (PAT) biosynthesis. Catalyzes the transfer of three mycolipenoyl groups onto diacyltrehalose (DAT) to form PAT. This Mycobacterium tuberculosis (strain ATCC 25618 / H37Rv) protein is Diacyltrehalose acyltransferase Chp2.